The following is a 64-amino-acid chain: Bacteriocin glycocin F (64 aa).

Residues 1–21 form the signal peptide; it reads MSKLVKTLTISEISKAQNNGG. Cystine bridges form between C26–C49 and C33–C42. A glycan (O-linked (GlcNAc) serine) is linked at S39. An S-linked (GlcNAc) cysteine glycan is attached at C64.

The protein resides in the secreted. Functionally, has antibacterial activity against L.plantarum ATCC 8014. In purified form, the activity is bacteriostatic (IC(50)=2 nM) rather than bactericidal. The polypeptide is Bacteriocin glycocin F (Lactiplantibacillus plantarum (Lactobacillus plantarum)).